The following is a 102-amino-acid chain: ATP-dependent Clp protease adapter protein ClpS (102 aa).

This sequence belongs to the ClpS family. As to quaternary structure, binds to the N-terminal domain of the chaperone ClpA.

In terms of biological role, involved in the modulation of the specificity of the ClpAP-mediated ATP-dependent protein degradation. The protein is ATP-dependent Clp protease adapter protein ClpS of Shewanella frigidimarina (strain NCIMB 400).